The primary structure comprises 367 residues: Apolipoprotein A-V (367 aa).

An N-terminal signal peptide occupies residues 1-20; the sequence is MVAVLTWALALLSAFATVQT. Serine 56 is subject to Phosphoserine. Residues 71-90 are disordered; it reads LGPLSGQGREPPGLPHDPEG.

This sequence belongs to the apolipoprotein A1/A4/E family. Interacts with GPIHBP1. Interacts with SORL1; this interaction leads to APOA5 internalization and sorting either to lysosomes and degradation, or to the trans-Golgi network. In terms of processing, phosphorylated by FAM20C in the extracellular medium.

It localises to the secreted. It is found in the early endosome. The protein localises to the late endosome. The protein resides in the golgi apparatus. Its subcellular location is the trans-Golgi network. Functionally, minor apolipoprotein mainly associated with HDL and to a lesser extent with VLDL. May also be associated with chylomicrons. Important determinant of plasma triglyceride (TG) levels by both being a potent stimulator of apo-CII lipoprotein lipase (LPL) TG hydrolysis and an inhibitor of the hepatic VLDL-TG production rate (without affecting the VLDL-apoB production rate). Activates poorly lecithin:cholesterol acyltransferase (LCAT) and does not enhance efflux of cholesterol from macrophages. Binds heparin. The sequence is that of Apolipoprotein A-V (APOA5) from Leptonychotes weddellii (Weddell seal).